The following is a 155-amino-acid chain: MTKVDFWPTLKDAYEPLYPQQLEILRQQVVSEGGPTATIQSRFNYAWGLIKSTDVNDERLGVKILTDIYKEAESRRRECLYYLTIGCYKLGEYSMAKRYVDTLFEHERNNKQVGALKSMVEDKIQKETLKGVVVAGGVLAGAVAVASFFLRNKRR.

The Cytoplasmic segment spans residues 1 to 131; that stretch reads MTKVDFWPTL…DKIQKETLKG (131 aa). Residues 132–149 traverse the membrane as a helical segment; the sequence is VVVAGGVLAGAVAVASFF. The Mitochondrial intermembrane portion of the chain corresponds to 150-155; that stretch reads LRNKRR.

Belongs to the FIS1 family. As to quaternary structure, interacts with DNM1 and MDV1.

It is found in the mitochondrion outer membrane. Functionally, has a role in mitochondrial fission. Has a role in outer membrane fission but not matrix separation. Required for targeting MDV1 to the mitochondria. Regulates the assembly of DNM1 into punctate structures, in the mitochondrial tubules, promoting mitochondrial membrane constriction and/or division. This chain is Mitochondrial fission 1 protein (FIS1), found in Saccharomyces cerevisiae (strain ATCC 204508 / S288c) (Baker's yeast).